The primary structure comprises 424 residues: UDP-N-acetylglucosamine 1-carboxyvinyltransferase (424 aa).

22 to 23 contributes to the phosphoenolpyruvate binding site; it reads KN. R95 lines the UDP-N-acetyl-alpha-D-glucosamine pocket. C119 functions as the Proton donor in the catalytic mechanism. C119 is modified (2-(S-cysteinyl)pyruvic acid O-phosphothioketal). Residues 124–128, D311, and I333 each bind UDP-N-acetyl-alpha-D-glucosamine; that span reads RPVDQ.

It belongs to the EPSP synthase family. MurA subfamily.

The protein localises to the cytoplasm. It carries out the reaction phosphoenolpyruvate + UDP-N-acetyl-alpha-D-glucosamine = UDP-N-acetyl-3-O-(1-carboxyvinyl)-alpha-D-glucosamine + phosphate. It participates in cell wall biogenesis; peptidoglycan biosynthesis. In terms of biological role, cell wall formation. Adds enolpyruvyl to UDP-N-acetylglucosamine. This Polaromonas naphthalenivorans (strain CJ2) protein is UDP-N-acetylglucosamine 1-carboxyvinyltransferase.